We begin with the raw amino-acid sequence, 178 residues long: Ribosome maturation factor RimM (178 aa).

The region spanning glutamate 99–phenylalanine 178 is the PRC barrel domain.

The protein belongs to the RimM family. In terms of assembly, binds ribosomal protein uS19.

Its subcellular location is the cytoplasm. Functionally, an accessory protein needed during the final step in the assembly of 30S ribosomal subunit, possibly for assembly of the head region. Essential for efficient processing of 16S rRNA. May be needed both before and after RbfA during the maturation of 16S rRNA. It has affinity for free ribosomal 30S subunits but not for 70S ribosomes. This is Ribosome maturation factor RimM from Haemophilus influenzae (strain ATCC 51907 / DSM 11121 / KW20 / Rd).